The primary structure comprises 213 residues: uncharacterized protein (213 aa).

Positions 2–91 constitute a CS domain; sequence SRHPEVKWAQ…AEAKWWKKLV (90 aa). Residues 168–213 are disordered; the sequence is GMGGMGGMDEFEDESDDEEEVSKPQDAEKAAEAGKSQESDAKAETS. A compositionally biased stretch (acidic residues) spans 176-187; that stretch reads DEFEDESDDEEE. The segment covering 188–213 has biased composition (basic and acidic residues); sequence VSKPQDAEKAAEAGKSQESDAKAETS.

It belongs to the p23/wos2 family.

This is an uncharacterized protein from Oryza sativa subsp. japonica (Rice).